Here is a 25-residue protein sequence, read N- to C-terminus: Kunitz-type serine protease inhibitor 4 (25 aa).

The region spanning 7 to 25 is the BPTI/Kunitz inhibitor domain; that stretch reads TCYLPKETGPCVGYFFRYY.

It localises to the secreted. In terms of biological role, inhibits trypsin, human plasma kallikrein and human neutrophil elastase. In Rhipicephalus microplus (Cattle tick), this protein is Kunitz-type serine protease inhibitor 4.